A 209-amino-acid chain; its full sequence is Mei4-dependent protein 1 (209 aa).

An N-terminal signal peptide occupies residues 1–22; sequence MLHATQLCYLLLFCFLPISISS.

It localises to the secreted. This chain is Mei4-dependent protein 1 (mde1), found in Schizosaccharomyces pombe (strain 972 / ATCC 24843) (Fission yeast).